A 95-amino-acid chain; its full sequence is Large ribosomal subunit protein bL25 (95 aa).

This sequence belongs to the bacterial ribosomal protein bL25 family. Part of the 50S ribosomal subunit; part of the 5S rRNA/L5/L18/L25 subcomplex. Contacts the 5S rRNA. Binds to the 5S rRNA independently of L5 and L18.

This is one of the proteins that binds to the 5S RNA in the ribosome where it forms part of the central protuberance. The protein is Large ribosomal subunit protein bL25 of Shewanella frigidimarina (strain NCIMB 400).